We begin with the raw amino-acid sequence, 166 residues long: Large ribosomal subunit protein bL19 (166 aa).

The protein belongs to the bacterial ribosomal protein bL19 family. Part of the 50S ribosomal subunit. Forms a cluster with proteins L3 and L14.

In terms of biological role, this protein is located at the 30S-50S ribosomal subunit interface and may play a role in the structure and function of the aminoacyl-tRNA binding site. Binds the 23S rRNA. The sequence is that of Large ribosomal subunit protein bL19 (rplS) from Deinococcus radiodurans (strain ATCC 13939 / DSM 20539 / JCM 16871 / CCUG 27074 / LMG 4051 / NBRC 15346 / NCIMB 9279 / VKM B-1422 / R1).